Consider the following 735-residue polypeptide: MSDHIFFASAPKHLGSLLAEELTRLGMAGAAETRGGARFSGRIEDGYRACLWSRIANRILLPLAQVSLGGPDEIHDSALEIPWEDHLTPDRTFAIQFDGQLQGVTNPHFAILQVKDAIADRFNRLYGRRPSVDPDDPDLRIHLYGNRDSLSFSLDLSGESLHQRGYRDAGSAAPLKENLAAALLLRAGWPEIAAEGGALLDPMCGSGTLIIEGALIAADIAPGLLRERFGFHGWTQHDEPAWQRLLAEARLRRTAGLKRLGSLRGYDVNPNAIRTSLHHLERAGLAGLAHFERRELSDCHPGREDDEGLVIVNPPYGERLGADEDLTQLYARLGSVLKERFVGWRAAVFTSSPELGKSLGLRATRIHSLYNGPIECRLLSFQIEPRYFVSHLPRPLPPEERSPGAAMFANRLSKNLKALRKWRQRDGIDCLRIYDADLPEYALAIDLYEGERRWVHVQEYAAPPSVDPKRARQRLREALGLIPEVLEVPGEQVFLKVRRQQKGRAQYERLAETGRFHEVSEYGLRFLVNFEDYLDTGLFLDHRDVRRLIGSLSDGKRFLNLFAYTGTATVHAAKGGAASTTTVDLSRTYLEWAGRNLELNGIRGPNHQLIQADCLRWIDSMAGQRRFDLIFLDPPSFSTSKRMHGTLDIQRDHVDIIQATMRLLEPGGRLIFSNNLRRFRIDLEGLAPFEVSDISAQTLPRDFARNPRIHNCWVIQHPESASNRRNGSDDEDRHA.

Residues 45–156 form the THUMP domain; the sequence is DGYRACLWSR…RDSLSFSLDL (112 aa).

This sequence belongs to the methyltransferase superfamily. RlmKL family.

Its subcellular location is the cytoplasm. The enzyme catalyses guanosine(2445) in 23S rRNA + S-adenosyl-L-methionine = N(2)-methylguanosine(2445) in 23S rRNA + S-adenosyl-L-homocysteine + H(+). It carries out the reaction guanosine(2069) in 23S rRNA + S-adenosyl-L-methionine = N(2)-methylguanosine(2069) in 23S rRNA + S-adenosyl-L-homocysteine + H(+). In terms of biological role, specifically methylates the guanine in position 2445 (m2G2445) and the guanine in position 2069 (m7G2069) of 23S rRNA. This Allochromatium vinosum (strain ATCC 17899 / DSM 180 / NBRC 103801 / NCIMB 10441 / D) (Chromatium vinosum) protein is Ribosomal RNA large subunit methyltransferase K/L.